Reading from the N-terminus, the 95-residue chain is Aspartyl/glutamyl-tRNA(Asn/Gln) amidotransferase subunit C (95 aa).

It belongs to the GatC family. In terms of assembly, heterotrimer of A, B and C subunits.

It catalyses the reaction L-glutamyl-tRNA(Gln) + L-glutamine + ATP + H2O = L-glutaminyl-tRNA(Gln) + L-glutamate + ADP + phosphate + H(+). The catalysed reaction is L-aspartyl-tRNA(Asn) + L-glutamine + ATP + H2O = L-asparaginyl-tRNA(Asn) + L-glutamate + ADP + phosphate + 2 H(+). Its function is as follows. Allows the formation of correctly charged Asn-tRNA(Asn) or Gln-tRNA(Gln) through the transamidation of misacylated Asp-tRNA(Asn) or Glu-tRNA(Gln) in organisms which lack either or both of asparaginyl-tRNA or glutaminyl-tRNA synthetases. The reaction takes place in the presence of glutamine and ATP through an activated phospho-Asp-tRNA(Asn) or phospho-Glu-tRNA(Gln). This chain is Aspartyl/glutamyl-tRNA(Asn/Gln) amidotransferase subunit C, found in Dehalococcoides mccartyi (strain CBDB1).